A 254-amino-acid chain; its full sequence is 3-deoxy-manno-octulosonate cytidylyltransferase (254 aa).

The protein belongs to the KdsB family.

The protein localises to the cytoplasm. It carries out the reaction 3-deoxy-alpha-D-manno-oct-2-ulosonate + CTP = CMP-3-deoxy-beta-D-manno-octulosonate + diphosphate. It functions in the pathway nucleotide-sugar biosynthesis; CMP-3-deoxy-D-manno-octulosonate biosynthesis; CMP-3-deoxy-D-manno-octulosonate from 3-deoxy-D-manno-octulosonate and CTP: step 1/1. The protein operates within bacterial outer membrane biogenesis; lipopolysaccharide biosynthesis. Activates KDO (a required 8-carbon sugar) for incorporation into bacterial lipopolysaccharide in Gram-negative bacteria. The polypeptide is 3-deoxy-manno-octulosonate cytidylyltransferase (Polynucleobacter necessarius subsp. necessarius (strain STIR1)).